The chain runs to 342 residues: Farnesyl pyrophosphate synthase 2 (342 aa).

Isopentenyl diphosphate contacts are provided by K47, R50, and Q86. Residues D93 and D97 each coordinate Mg(2+). R102 is a binding site for dimethylallyl diphosphate. R103 contributes to the isopentenyl diphosphate binding site. Residues K190, T191, Q229, K246, and K255 each coordinate dimethylallyl diphosphate.

This sequence belongs to the FPP/GGPP synthase family. The cofactor is Mg(2+).

The protein localises to the cytoplasm. It catalyses the reaction isopentenyl diphosphate + dimethylallyl diphosphate = (2E)-geranyl diphosphate + diphosphate. The catalysed reaction is isopentenyl diphosphate + (2E)-geranyl diphosphate = (2E,6E)-farnesyl diphosphate + diphosphate. It participates in isoprenoid biosynthesis; farnesyl diphosphate biosynthesis; farnesyl diphosphate from geranyl diphosphate and isopentenyl diphosphate: step 1/1. The protein operates within isoprenoid biosynthesis; geranyl diphosphate biosynthesis; geranyl diphosphate from dimethylallyl diphosphate and isopentenyl diphosphate: step 1/1. Functionally, catalyzes the sequential condensation of isopentenyl pyrophosphate with the allylic pyrophosphates, dimethylallyl pyrophosphate, and then with the resultant geranylpyrophosphate to the ultimate product farnesyl pyrophosphate. The chain is Farnesyl pyrophosphate synthase 2 (FPS2) from Arabidopsis thaliana (Mouse-ear cress).